The chain runs to 213 residues: Kynurenine formamidase (213 aa).

A substrate-binding site is contributed by Trp18. Positions 48, 52, and 54 each coordinate Zn(2+). The Proton donor/acceptor role is filled by His58. Residues His160 and Glu172 each coordinate Zn(2+).

This sequence belongs to the Cyclase 1 superfamily. KynB family. Homodimer. It depends on Zn(2+) as a cofactor.

The enzyme catalyses N-formyl-L-kynurenine + H2O = L-kynurenine + formate + H(+). The protein operates within amino-acid degradation; L-tryptophan degradation via kynurenine pathway; L-kynurenine from L-tryptophan: step 2/2. Its function is as follows. Catalyzes the hydrolysis of N-formyl-L-kynurenine to L-kynurenine, the second step in the kynurenine pathway of tryptophan degradation. This Burkholderia ambifaria (strain MC40-6) protein is Kynurenine formamidase.